Reading from the N-terminus, the 117-residue chain is Large ribosomal subunit protein uL18 (117 aa).

It belongs to the universal ribosomal protein uL18 family. In terms of assembly, part of the 50S ribosomal subunit; part of the 5S rRNA/L5/L18/L25 subcomplex. Contacts the 5S and 23S rRNAs.

This is one of the proteins that bind and probably mediate the attachment of the 5S RNA into the large ribosomal subunit, where it forms part of the central protuberance. This is Large ribosomal subunit protein uL18 from Hydrogenovibrio crunogenus (strain DSM 25203 / XCL-2) (Thiomicrospira crunogena).